Here is a 913-residue protein sequence, read N- to C-terminus: Eukaryotic translation initiation factor 3 subunit C (913 aa).

The tract at residues 1 to 44 (MSRFFTTGSDSESESSLSGEELVTKPVGGNYGKQPLLLSEDEED) is disordered. Residues 8-21 (GSDSESESSLSGEE) are compositionally biased toward low complexity. 7 positions are modified to phosphoserine: Ser-9, Ser-11, Ser-13, Ser-15, Ser-16, Ser-18, and Ser-39. Lys-99 is modified (N6-acetyllysine). Disordered regions lie at residues 157-301 (TSYK…GGEW) and 522-542 (QLTPPEGSSKSEQDQAENEGE). 4 positions are modified to phosphoserine: Ser-166, Ser-178, Ser-181, and Ser-182. Residues 166-190 (SADEDAEKNEEDSEGSSDEDEDEDG) show a composition bias toward acidic residues. The segment covering 199 to 216 (KKSEAPSGESRKFLKKMD) has biased composition (basic and acidic residues). A compositionally biased stretch (acidic residues) spans 217–232 (DEDEDSEDSEDDEDWD). Over residues 261–278 (PTTDEDKKAAEKKREDKA) the composition is skewed to basic and acidic residues. A compositionally biased stretch (polar residues) spans 522-531 (QLTPPEGSSK). Thr-524 is subject to Phosphothreonine. Lys-643 bears the N6-acetyllysine mark. A PCI domain is found at 673–849 (FHLHINLELL…QTVVMHRTEP (177 aa)). Positions 885 to 913 (FRDQKDGYRKNEGYMRRGGYRQQQSQTAY) are disordered. A compositionally biased stretch (basic and acidic residues) spans 886–899 (RDQKDGYRKNEGYM). At Ser-909 the chain carries Phosphoserine.

This sequence belongs to the eIF-3 subunit C family. Component of the eukaryotic translation initiation factor 3 (eIF-3) complex, which is composed of 13 subunits: EIF3A, EIF3B, EIF3C, EIF3D, EIF3E, EIF3F, EIF3G, EIF3H, EIF3I, EIF3J, EIF3K, EIF3L and EIF3M. The eIF-3 complex appears to include 3 stable modules: module A is composed of EIF3A, EIF3B, EIF3G and EIF3I; module B is composed of EIF3F, EIF3H, and EIF3M; and module C is composed of EIF3C, EIF3D, EIF3E, EIF3K and EIF3L. EIF3C of module C binds EIF3B of module A and EIF3H of module B, thereby linking the three modules. EIF3J is a labile subunit that binds to the eIF-3 complex via EIF3B. The eIF-3 complex interacts with RPS6KB1 under conditions of nutrient depletion. Mitogenic stimulation leads to binding and activation of a complex composed of MTOR and RPTOR, leading to phosphorylation and release of RPS6KB1 and binding of EIF4B to eIF-3. Interacts with ALKBH4, IFIT1 and IFIT2. Interacts with BZW2/5MP1. Phosphorylated. Phosphorylation is enhanced upon serum stimulation.

Its subcellular location is the cytoplasm. In terms of biological role, component of the eukaryotic translation initiation factor 3 (eIF-3) complex, which is required for several steps in the initiation of protein synthesis. The eIF-3 complex associates with the 40S ribosome and facilitates the recruitment of eIF-1, eIF-1A, eIF-2:GTP:methionyl-tRNAi and eIF-5 to form the 43S pre-initiation complex (43S PIC). The eIF-3 complex stimulates mRNA recruitment to the 43S PIC and scanning of the mRNA for AUG recognition. The eIF-3 complex is also required for disassembly and recycling of post-termination ribosomal complexes and subsequently prevents premature joining of the 40S and 60S ribosomal subunits prior to initiation. The eIF-3 complex specifically targets and initiates translation of a subset of mRNAs involved in cell proliferation, including cell cycling, differentiation and apoptosis, and uses different modes of RNA stem-loop binding to exert either translational activation or repression. This is Eukaryotic translation initiation factor 3 subunit C from Pongo abelii (Sumatran orangutan).